Here is a 300-residue protein sequence, read N- to C-terminus: Glutamyl-Q tRNA(Asp) synthetase (300 aa).

L-glutamate is bound by residues Arg14 to Thr18 and Glu50. The 'HIGH' region motif lies at Pro17–Ser27. The Zn(2+) site is built by Cys106, Cys108, Tyr120, and Cys124. L-glutamate contacts are provided by Tyr177 and Arg195. A 'KMSKS' region motif is present at residues Lys233–Ser237. Lys236 contributes to the ATP binding site.

It belongs to the class-I aminoacyl-tRNA synthetase family. GluQ subfamily. Zn(2+) is required as a cofactor.

Its function is as follows. Catalyzes the tRNA-independent activation of glutamate in presence of ATP and the subsequent transfer of glutamate onto a tRNA(Asp). Glutamate is transferred on the 2-amino-5-(4,5-dihydroxy-2-cyclopenten-1-yl) moiety of the queuosine in the wobble position of the QUC anticodon. The chain is Glutamyl-Q tRNA(Asp) synthetase from Pseudomonas putida (strain ATCC 700007 / DSM 6899 / JCM 31910 / BCRC 17059 / LMG 24140 / F1).